The sequence spans 220 residues: Deoxyribose-phosphate aldolase (220 aa).

Asp-89 acts as the Proton donor/acceptor in catalysis. Lys-151 serves as the catalytic Schiff-base intermediate with acetaldehyde. Lys-180 (proton donor/acceptor) is an active-site residue.

It belongs to the DeoC/FbaB aldolase family. DeoC type 1 subfamily.

The protein resides in the cytoplasm. The enzyme catalyses 2-deoxy-D-ribose 5-phosphate = D-glyceraldehyde 3-phosphate + acetaldehyde. It functions in the pathway carbohydrate degradation; 2-deoxy-D-ribose 1-phosphate degradation; D-glyceraldehyde 3-phosphate and acetaldehyde from 2-deoxy-alpha-D-ribose 1-phosphate: step 2/2. Functionally, catalyzes a reversible aldol reaction between acetaldehyde and D-glyceraldehyde 3-phosphate to generate 2-deoxy-D-ribose 5-phosphate. This Streptococcus pneumoniae (strain 70585) protein is Deoxyribose-phosphate aldolase.